The chain runs to 348 residues: Isopentenyl-diphosphate delta-isomerase (348 aa).

Arginine 11–lysine 12 serves as a coordination point for substrate. FMN contacts are provided by residues alanine 70–threonine 72, serine 100, and asparagine 131. Residue serine 100 to arginine 102 participates in substrate binding. Glutamine 165 contacts substrate. Glutamate 166 is a Mg(2+) binding site. FMN contacts are provided by residues lysine 197, threonine 231, glycine 278–arginine 280, and alanine 299–arginine 300.

It belongs to the IPP isomerase type 2 family. As to quaternary structure, homooctamer. Dimer of tetramers. Requires FMN as cofactor. NADPH is required as a cofactor. The cofactor is Mg(2+).

It is found in the cytoplasm. The catalysed reaction is isopentenyl diphosphate = dimethylallyl diphosphate. Involved in the biosynthesis of isoprenoids. Catalyzes the 1,3-allylic rearrangement of the homoallylic substrate isopentenyl (IPP) to its allylic isomer, dimethylallyl diphosphate (DMAPP). This is Isopentenyl-diphosphate delta-isomerase from Mycobacterium marinum (strain ATCC BAA-535 / M).